The chain runs to 145 residues: 3-dehydroquinate dehydratase (145 aa).

Tyrosine 24 acts as the Proton acceptor in catalysis. 3 residues coordinate substrate: asparagine 76, histidine 82, and aspartate 89. Histidine 102 serves as the catalytic Proton donor. Substrate is bound by residues 103 to 104 (LS) and arginine 113.

The protein belongs to the type-II 3-dehydroquinase family. As to quaternary structure, homododecamer.

The enzyme catalyses 3-dehydroquinate = 3-dehydroshikimate + H2O. It functions in the pathway metabolic intermediate biosynthesis; chorismate biosynthesis; chorismate from D-erythrose 4-phosphate and phosphoenolpyruvate: step 3/7. Functionally, catalyzes a trans-dehydration via an enolate intermediate. In Nitrosomonas eutropha (strain DSM 101675 / C91 / Nm57), this protein is 3-dehydroquinate dehydratase.